Consider the following 251-residue polypeptide: MAGHSKWATTKHKKAANDAKRGKEFAKLIKNIEVAARTGGGDPSANPTLDDMIKKAKKASVPNDNIERARKRGSGEEAGGADWMNIMYEGYGPNGVAMLIECLTDNRNRAATEVRTAMTKNGGNLGESGSVSYMFTRTGVVTVQKGELSEDDVLMAVLEAGAEEVNDNGDLFEITCAPTDIQAVRDALVEAGIEVEDSESDFRASVEVPLDADGARKIFKLVDALEDSDDVQNVYTNIDLSDEVLAELESD.

Residues 1–22 (MAGHSKWATTKHKKAANDAKRG) are disordered.

This sequence belongs to the TACO1 family.

It localises to the cytoplasm. In Corynebacterium glutamicum (strain R), this protein is Probable transcriptional regulatory protein cgR_1708.